The following is a 321-amino-acid chain: 6-phosphogluconolactonase-like protein 1 (321 aa).

Positions 36-85 (GKVSRSTQMSGTSLNGNGNTESKTMERVNSVRSNASSRGGSEDGATKKLK) are disordered. Positions 39–57 (SRSTQMSGTSLNGNGNTES) are enriched in polar residues. Positions 63–74 (VNSVRSNASSRG) are enriched in low complexity. A phosphoserine mark is found at Ser65 and Ser68. Basic and acidic residues predominate over residues 75–85 (GSEDGATKKLK). Position 320 is a phosphothreonine (Thr320).

It belongs to the glucosamine/galactosamine-6-phosphate isomerase family. 6-phosphogluconolactonase subfamily.

Its subcellular location is the cytoplasm. The protein resides in the nucleus. Functionally, may be involved in regulation of tRNA subcellular distribution. This chain is 6-phosphogluconolactonase-like protein 1 (SOL1), found in Saccharomyces cerevisiae (strain ATCC 204508 / S288c) (Baker's yeast).